The sequence spans 423 residues: Adenylosuccinate synthetase (423 aa).

Residues 12–18 and 40–42 contribute to the GTP site; these read GDEGKGK and GHT. The active-site Proton acceptor is D13. Mg(2+) is bound by residues D13 and G40. IMP-binding positions include 13-16, 38-41, T129, R143, Q221, T236, and R300; these read DEGK and NAGH. H41 serves as the catalytic Proton donor. 296–302 contributes to the substrate binding site; it reads SVTGRKR. Residues R302, 328-330, and 408-410 each bind GTP; these read KSD and SVG.

This sequence belongs to the adenylosuccinate synthetase family. As to quaternary structure, homodimer. The cofactor is Mg(2+).

The protein localises to the cytoplasm. It carries out the reaction IMP + L-aspartate + GTP = N(6)-(1,2-dicarboxyethyl)-AMP + GDP + phosphate + 2 H(+). The protein operates within purine metabolism; AMP biosynthesis via de novo pathway; AMP from IMP: step 1/2. Plays an important role in the de novo pathway of purine nucleotide biosynthesis. Catalyzes the first committed step in the biosynthesis of AMP from IMP. The sequence is that of Adenylosuccinate synthetase from Bacteroides fragilis (strain ATCC 25285 / DSM 2151 / CCUG 4856 / JCM 11019 / LMG 10263 / NCTC 9343 / Onslow / VPI 2553 / EN-2).